Consider the following 76-residue polypeptide: Small ribosomal subunit protein bS21C (76 aa).

Residues 52 to 76 form a disordered region; it reads GRQRKLARKQMQREGLLPTKPRKDK.

It belongs to the bacterial ribosomal protein bS21 family.

The protein is Small ribosomal subunit protein bS21C (rpsU3) of Agrobacterium fabrum (strain C58 / ATCC 33970) (Agrobacterium tumefaciens (strain C58)).